A 146-amino-acid polypeptide reads, in one-letter code: Fluoride-specific ion channel FluC (146 aa).

The next 4 helical transmembrane spans lie at 8-28 (FAIA…TLTV), 47-67 (LANL…QALV), 91-111 (IGVL…AVFA), and 121-141 (MLLG…AAVV). Positions 95 and 98 each coordinate Na(+).

Belongs to the fluoride channel Fluc/FEX (TC 1.A.43) family.

It localises to the cell inner membrane. It catalyses the reaction fluoride(in) = fluoride(out). With respect to regulation, na(+) is not transported, but it plays an essential structural role and its presence is essential for fluoride channel function. Functionally, fluoride-specific ion channel. Important for reducing fluoride concentration in the cell, thus reducing its toxicity. This Rhodopirellula baltica (strain DSM 10527 / NCIMB 13988 / SH1) protein is Fluoride-specific ion channel FluC.